Consider the following 511-residue polypeptide: MSGYVLLTVQLAAVLLLVTLWRAFRPNTRSNRVVSYIINVGNTPKIHQKNKADFHPRTNVEISPLVVPNLFDRWLNAHSDLPLSISRWRGKYQVPGGGERLPILTGADEIKAVFKDSGNHRKASNLNGGWVMGDLVGDGVGLISEGHWKRVHAVVSPPFTQKPTTYVPFVQSRISRHFSELYPEDEGGRTLRIKPAEDLKLLPFWVISDLLYGNLSPEMTEELLQITDLRTDVFRYAFKGGLSLFSISKIFYPDIRNKLHVFHTRWANFNRKAYQCALNRDDASACAIVTLYRAVEQGQITPTELMHTLDEALFANIDVTIGSFSWIPQFLAEDAALQSKLRKEISHARSDTAPESWVKYIGSNSTLLASCINESARLKPVTNYTYAQSMPTDRDVGGYRIPRGTFMVVDTNALNIWDDAWGSDKTSYRPQRFLEESRASFRYRFWRFGFGPRQCIAQALADTILKVLVAYTVENYELKSTGKSAANEEDAHKQGEAWFKVAEQGIILEAL.

The N-terminal stretch at 1–23 is a signal peptide; that stretch reads MSGYVLLTVQLAAVLLLVTLWRA. Residues Asn364, Asn373, and Asn383 are each glycosylated (N-linked (GlcNAc...) asparagine). Cys455 is a binding site for heme.

Belongs to the cytochrome P450 family. Requires heme as cofactor.

Its pathway is alkaloid biosynthesis. Functionally, cytochrome P450 monooxygenase; part of the gene cluster that mediates the biosynthesis of the mycotoxins roquefortine C and meleagrin. The first stage is catalyzed by the dipeptide synthase roqA which condenses histidine and tryptophan to produce histidyltryptophanyldiketopiperazine (HTD). HTD is then converted to roquefortine C through two possible pathways. In the first pathway, prenyltransferase roqD transforms HTD to the intermediate roquefortine D, which is in turn converted to roquefortine C by the cytochrome P450 monooxygenase roqR. In the second pathway, HTD is first converted to the intermediate dehydrohistidyltryptophanyldi-ketopiperazine (DHTD) by roqR which is then prenylated by roqD to form roquefortine C. Roquefortine C can be further transformed to meleagrin via three more reactions including oxydation to glandicolin A by roqM, which is further reduced to glandicoline B by roqO. Finally, glandicoline B is converted to meleagrin by the glandicoline B O-methyltransferase roqN. More studies identified further branching and additional metabolites produced by the roquefortine/meleagrin cluster, including roquefortine F, roquefortine L, roquefortine M, roquefortine N and neoxaline. This Penicillium rubens (strain ATCC 28089 / DSM 1075 / NRRL 1951 / Wisconsin 54-1255) (Penicillium chrysogenum) protein is Cytochrome P450 monooxygenase roqR.